Consider the following 166-residue polypeptide: Endoribonuclease YbeY (166 aa).

Zn(2+) is bound by residues His132, His136, and His142.

Belongs to the endoribonuclease YbeY family. Requires Zn(2+) as cofactor.

It localises to the cytoplasm. Its function is as follows. Single strand-specific metallo-endoribonuclease involved in late-stage 70S ribosome quality control and in maturation of the 3' terminus of the 16S rRNA. In Clostridium botulinum (strain Langeland / NCTC 10281 / Type F), this protein is Endoribonuclease YbeY.